We begin with the raw amino-acid sequence, 116 residues long: Flagellar transcriptional regulator FlhD (116 aa).

It belongs to the FlhD family. In terms of assembly, homodimer; disulfide-linked. Forms a heterohexamer composed of two FlhC and four FlhD subunits. Each FlhC binds a FlhD dimer, forming a heterotrimer, and a hexamer assembles by dimerization of two heterotrimers.

Its subcellular location is the cytoplasm. Functions in complex with FlhC as a master transcriptional regulator that regulates transcription of several flagellar and non-flagellar operons by binding to their promoter region. Activates expression of class 2 flagellar genes, including fliA, which is a flagellum-specific sigma factor that turns on the class 3 genes. Also regulates genes whose products function in a variety of physiological pathways. This Yersinia pseudotuberculosis serotype O:1b (strain IP 31758) protein is Flagellar transcriptional regulator FlhD.